We begin with the raw amino-acid sequence, 339 residues long: 2-deoxy-scyllo-inosamine dehydrogenase (339 aa).

The Zn(2+) site is built by C37, H59, C88, C91, C94, C102, and E143.

Belongs to the zinc-containing alcohol dehydrogenase family. DOIA dehydrogenase subfamily. Zn(2+) is required as a cofactor.

The enzyme catalyses 2-deoxy-scyllo-inosamine + NADP(+) = 3-amino-2,3-dideoxy-scyllo-inosose + NADPH + H(+). The catalysed reaction is 2-deoxy-scyllo-inosamine + NAD(+) = 3-amino-2,3-dideoxy-scyllo-inosose + NADH + H(+). It functions in the pathway metabolic intermediate biosynthesis; 2-deoxystreptamine biosynthesis; 2-deoxystreptamine from D-glucose 6-phosphate: step 3/4. The protein operates within antibiotic biosynthesis; paromomycin biosynthesis. Its function is as follows. Catalyzes the oxidation of 2-deoxy-scyllo-inosamine (DOIA) with NAD(+) or NADP(+), forming 3-amino-2,3-dideoxy-scyllo-inosose (amino-DOI). This Streptomyces paromomycinus (Streptomyces rimosus subsp. paromomycinus) protein is 2-deoxy-scyllo-inosamine dehydrogenase (parE).